A 120-amino-acid chain; its full sequence is NAD(P)H-quinone oxidoreductase subunit 3 (120 aa).

A run of 3 helical transmembrane segments spans residues 10–30 (FLGFLLIAAAVPILALVTNLI), 64–84 (MFALVFVIFDVETVFLYPWAV), and 89–109 (LGLLAFIEALIFIAILVIALA).

The protein belongs to the complex I subunit 3 family. In terms of assembly, NDH-1 can be composed of about 15 different subunits; different subcomplexes with different compositions have been identified which probably have different functions.

The protein resides in the cellular thylakoid membrane. The enzyme catalyses a plastoquinone + NADH + (n+1) H(+)(in) = a plastoquinol + NAD(+) + n H(+)(out). It carries out the reaction a plastoquinone + NADPH + (n+1) H(+)(in) = a plastoquinol + NADP(+) + n H(+)(out). Its function is as follows. NDH-1 shuttles electrons from an unknown electron donor, via FMN and iron-sulfur (Fe-S) centers, to quinones in the respiratory and/or the photosynthetic chain. The immediate electron acceptor for the enzyme in this species is believed to be plastoquinone. Couples the redox reaction to proton translocation, and thus conserves the redox energy in a proton gradient. Cyanobacterial NDH-1 also plays a role in inorganic carbon-concentration. This Prochlorococcus marinus (strain MIT 9312) protein is NAD(P)H-quinone oxidoreductase subunit 3.